The following is a 488-amino-acid chain: Ammonium transporter Rh type C-like 2 (488 aa).

Residues 1-21 (MGNCFGSRGICDRPKNTNIRL) lie on the Cytoplasmic side of the membrane. A helical transmembrane segment spans residues 22 to 42 (SLPAVCFVWQVSMIILFGVFV). The Extracellular segment spans residues 43–73 (RYNEEADTNWVYTKKEKNITSDIENDFYFRY). N-linked (GlcNAc...) asparagine glycosylation occurs at Asn60. The helical transmembrane segment at 74–94 (PSFQDVHVMIFVGFGFLMTFL) threads the bilayer. Residues 95–98 (KRYS) are Cytoplasmic-facing. The chain crosses the membrane as a helical span at residues 99–119 (FGAVGFNFLIAAFGLQWALLM). The Extracellular segment spans residues 120-139 (QGWFSPLGDDGKIKIGIENL). A helical transmembrane segment spans residues 140–160 (INADFCVASCLIAYGAVLGKV). Residues 161 to 162 (SP) are Cytoplasmic-facing. The chain crosses the membrane as a helical span at residues 163–183 (VQLLVMTLFGITLYAVEEFII). The Extracellular portion of the chain corresponds to 184–191 (LRVLNAKD). A helical transmembrane segment spans residues 192-214 (AGGSMVIHTFGAYYGLSISRVLY). At 215 to 232 (RPNLNKSKHMNGSVYHSD) the chain is on the cytoplasmic side. A helical transmembrane segment spans residues 233–253 (VFAMIGTLFLWMFWPSFNSAI). Residues 254–264 (CNHGDGQHRAA) are Extracellular-facing. A helical membrane pass occupies residues 265–285 (INTYLALASTVLTTVAISSMF). At 286–298 (EKTGKLDMVHIQN) the chain is on the cytoplasmic side. The chain crosses the membrane as a helical span at residues 299–319 (STLAGGVAVGTAAEFMLMPYG). Ser320 is a topological domain (extracellular). The chain crosses the membrane as a helical span at residues 321-341 (LIVGFFCGIISTLGYIYLTPF). The Cytoplasmic portion of the chain corresponds to 342–356 (LEERLKIQDTCGIHN). The chain crosses the membrane as a helical span at residues 357-377 (LHAMPGVIGGIVGAISAAAAS). Residues 378-409 (KEVYGDLGLKNIFSIEGSNVTRLPTVQGGYQA) lie on the Extracellular side of the membrane. A helical membrane pass occupies residues 410–430 (AALCVALCFGIGGGTFVGLVL). The Cytoplasmic portion of the chain corresponds to 431 to 488 (KLPIWGDPADEHCFNDEMYWEVPEDEESIIPPVLSYNNHMIPNNKHEEMRETNFAEQS).

It belongs to the ammonium transporter (TC 2.A.49) family. Rh subfamily. As to quaternary structure, homotrimer. At larval stages, expressed only in the yolk sac and gill. However, the kidney and the gills are major sites of expression in adults.

The protein resides in the apical cell membrane. Functions as an ammonia transporter. May play a role in the elimination of ammonia in the gill. In Danio rerio (Zebrafish), this protein is Ammonium transporter Rh type C-like 2 (rhcgl2).